The primary structure comprises 438 residues: Phosphatidylserine decarboxylase proenzyme 1, mitochondrial (438 aa).

The transit peptide at 1 to 21 (MRRFRVWPPSPSPWPLLASRP) directs the protein to the mitochondrion. The Mitochondrial matrix portion of the chain corresponds to 22 to 48 (CPHSHHHRSPFHASANSGARQGNFILP). A helical membrane pass occupies residues 49–67 (GATAATLVMFGILHARRMY). The Mitochondrial intermembrane segment spans residues 68–438 (EDQKVVERKE…EAIGRWTSRE (371 aa)). Catalysis depends on charge relay system; for autoendoproteolytic cleavage activity residues Asp-173, His-273, and Ser-387. The Schiff-base intermediate with substrate; via pyruvic acid; for decarboxylase activity role is filled by Ser-387. A Pyruvic acid (Ser); by autocatalysis modification is found at Ser-387.

The protein belongs to the phosphatidylserine decarboxylase family. PSD-B subfamily. Eukaryotic type I sub-subfamily. As to quaternary structure, heterodimer of a large membrane-associated beta subunit and a small pyruvoyl-containing alpha subunit. Pyruvate is required as a cofactor. Post-translationally, is synthesized initially as an inactive proenzyme. Formation of the active enzyme involves a self-maturation process in which the active site pyruvoyl group is generated from an internal serine residue via an autocatalytic post-translational modification. Two non-identical subunits are generated from the proenzyme in this reaction, and the pyruvate is formed at the N-terminus of the alpha chain, which is derived from the carboxyl end of the proenzyme. The autoendoproteolytic cleavage occurs by a canonical serine protease mechanism, in which the side chain hydroxyl group of the serine supplies its oxygen atom to form the C-terminus of the beta chain, while the remainder of the serine residue undergoes an oxidative deamination to produce ammonia and the pyruvoyl prosthetic group on the alpha chain. During this reaction, the Ser that is part of the protease active site of the proenzyme becomes the pyruvoyl prosthetic group, which constitutes an essential element of the active site of the mature decarboxylase.

The protein resides in the mitochondrion inner membrane. The enzyme catalyses a 1,2-diacyl-sn-glycero-3-phospho-L-serine + H(+) = a 1,2-diacyl-sn-glycero-3-phosphoethanolamine + CO2. It functions in the pathway phospholipid metabolism; phosphatidylethanolamine biosynthesis; phosphatidylethanolamine from CDP-diacylglycerol: step 2/2. Its function is as follows. Catalyzes the formation of phosphatidylethanolamine (PtdEtn) from phosphatidylserine (PtdSer). Plays a central role in phospholipid metabolism and in the interorganelle trafficking of phosphatidylserine. This Oryza sativa subsp. japonica (Rice) protein is Phosphatidylserine decarboxylase proenzyme 1, mitochondrial (PSD1).